Consider the following 338-residue polypeptide: Mitoferrin-1 (338 aa).

The tract at residues 1–42 is disordered; sequence MELRSGSVGSQAVARRMDGDSRDGGGGKDATGSEDYENLPTS. Positions 15 to 26 are enriched in basic and acidic residues; the sequence is RRMDGDSRDGGG. Solcar repeat units lie at residues 43–131, 141–225, and 232–326; these read ASVS…MKRT, NSHL…LQEQ, and YNPQ…FKYF. 6 helical membrane passes run 45-64, 106-125, 143-162, 200-219, 234-253, and 301-320; these read VSTH…SVMY, GVNV…FACY, HLAN…AVMN, SYTT…FITY, PQSH…AATT, and GIQA…WSVY.

Belongs to the mitochondrial carrier (TC 2.A.29) family. Interacts with ACB10; this interaction stabilizes SLC25A37 and enhances the function of SLC25A37 to import mitochondrial iron during erythroid differentiation.

It is found in the mitochondrion inner membrane. The catalysed reaction is Fe(2+)(in) = Fe(2+)(out). In terms of biological role, mitochondrial iron transporter that specifically mediates iron uptake in developing erythroid cells, thereby playing an essential role in heme biosynthesis. The protein is Mitoferrin-1 (SLC25A37) of Homo sapiens (Human).